A 564-amino-acid chain; its full sequence is Adenine deaminase (564 aa).

This sequence belongs to the metallo-dependent hydrolases superfamily. Adenine deaminase family. The cofactor is Mn(2+).

The enzyme catalyses adenine + H2O + H(+) = hypoxanthine + NH4(+). The protein is Adenine deaminase of Deinococcus geothermalis (strain DSM 11300 / CIP 105573 / AG-3a).